A 710-amino-acid chain; its full sequence is Early transcription factor 82 kDa subunit (710 aa).

This sequence belongs to the poxviridae VETF large subunit family. In terms of assembly, heterodimer of a 70 kDa and a 82 kDa subunit. Part of the early transcription complex composed of ETF, RAP94/OPG109, and the DNA-directed RNA polymerase.

It localises to the virion. Its function is as follows. Acts with RNA polymerase to initiate transcription from early gene promoters. Is recruited by the RPO-associated protein of 94 kDa RAP94/OPG109 to form the early transcription complex, which also contains the core RNA polymerase. ETF heterodimer binds to early gene promoters. In Homo sapiens (Human), this protein is Early transcription factor 82 kDa subunit (OPG133).